The primary structure comprises 288 residues: HTH-type transcriptional regulator CzcR (288 aa).

Residues 1 to 58 (MELRDLQIFQSVADQGSVSSAAKELNYVQSNVTARIKQLENELKTPLFYRHKRGMTLT) form the HTH lysR-type domain. A DNA-binding region (H-T-H motif) is located at residues 18–37 (VSSAAKELNYVQSNVTARIK).

It belongs to the LysR transcriptional regulatory family.

This is HTH-type transcriptional regulator CzcR (czcR) from Bacillus cereus (strain ATCC 10987 / NRS 248).